Reading from the N-terminus, the 580-residue chain is DNA ligase B (580 aa).

The N6-AMP-lysine intermediate role is filled by K135.

This sequence belongs to the NAD-dependent DNA ligase family. LigB subfamily.

The catalysed reaction is NAD(+) + (deoxyribonucleotide)n-3'-hydroxyl + 5'-phospho-(deoxyribonucleotide)m = (deoxyribonucleotide)n+m + AMP + beta-nicotinamide D-nucleotide.. Functionally, catalyzes the formation of phosphodiester linkages between 5'-phosphoryl and 3'-hydroxyl groups in double-stranded DNA using NAD as a coenzyme and as the energy source for the reaction. In Photorhabdus laumondii subsp. laumondii (strain DSM 15139 / CIP 105565 / TT01) (Photorhabdus luminescens subsp. laumondii), this protein is DNA ligase B.